A 30-amino-acid chain; its full sequence is Bowman-Birk type proteinase inhibitor 4 (30 aa).

2 disulfide bridges follow: Cys-9-Cys-24 and Cys-14-Cys-22.

Functionally, inhibits trypsin (IC(50)=17.60 nM) and, to a lesser extent, alpha-chymotrypsin (IC(50)=2.38 uM). This Lathyrus sativus (White vetchling) protein is Bowman-Birk type proteinase inhibitor 4.